Reading from the N-terminus, the 349-residue chain is Core protein VP7 (349 aa).

A glycan (N-linked (GlcNAc...) asparagine; by host) is linked at Asn287.

Belongs to the orbivirus VP7 family. Homotrimer that assemble in a complex of 260 capsomers on an inner scaffold composed of VP3.

The protein resides in the virion. Functionally, the VP7 protein is one of the five proteins (with VP1, VP3, VP4, and VP6) which form the inner capsid of the virus. In Antilocapra americana (Pronghorn), this protein is Core protein VP7 (Segment-7).